The following is a 423-amino-acid chain: Putative protein phosphatase 2C 50 (423 aa).

The PPM-type phosphatase domain maps to 52–380 (IFAFPFPTGT…DNMAAVVVPL (329 aa)). Residues Asp74, Gly75, Asp320, and Asp371 each contribute to the Mn(2+) site.

It belongs to the PP2C family. Mg(2+) is required as a cofactor. It depends on Mn(2+) as a cofactor.

The enzyme catalyses O-phospho-L-seryl-[protein] + H2O = L-seryl-[protein] + phosphate. It catalyses the reaction O-phospho-L-threonyl-[protein] + H2O = L-threonyl-[protein] + phosphate. The sequence is that of Putative protein phosphatase 2C 50 from Arabidopsis thaliana (Mouse-ear cress).